The following is a 445-amino-acid chain: CBL-interacting serine/threonine-protein kinase 8 (445 aa).

Residues Y9–F262 enclose the Protein kinase domain. ATP-binding positions include I15–V23 and K38. D132 functions as the Proton acceptor in the catalytic mechanism. Residues D150–E177 are activation loop. Phosphoserine is present on S154. T166 carries the post-translational modification Phosphothreonine. In terms of domain architecture, NAF spans T302–D326. The tract at residues K333–T362 is PPI.

Belongs to the protein kinase superfamily. CAMK Ser/Thr protein kinase family. SNF1 subfamily. Interacts with CBL1 and CBL9. Requires Mn(2+) as cofactor. As to expression, mostly expressed in roots, and, to a lower extent, in leaves, stems, flowers, and siliques.

The enzyme catalyses L-seryl-[protein] + ATP = O-phospho-L-seryl-[protein] + ADP + H(+). The catalysed reaction is L-threonyl-[protein] + ATP = O-phospho-L-threonyl-[protein] + ADP + H(+). Its function is as follows. CIPK serine-threonine protein kinases interact with CBL proteins. Binding of a CBL protein to the regulatory NAF domain of CIPK protein lead to the activation of the kinase in a calcium-dependent manner. This is CBL-interacting serine/threonine-protein kinase 8 (CIPK8) from Arabidopsis thaliana (Mouse-ear cress).